Consider the following 297-residue polypeptide: Large ribosomal subunit protein uL18 (297 aa).

Gly2 is modified (N-acetylglycine). 2 positions are modified to N6-acetyllysine: Lys5 and Lys48. At Ser185 the chain carries Phosphoserine. Residue Lys220 is modified to N6-acetyllysine; alternate. Lys220 participates in a covalent cross-link: Glycyl lysine isopeptide (Lys-Gly) (interchain with G-Cter in SUMO1); alternate. Lys220 is covalently cross-linked (Glycyl lysine isopeptide (Lys-Gly) (interchain with G-Cter in SUMO2); alternate). Residue Thr232 is modified to Phosphothreonine. Residues 253 to 297 (YEKKPKKEVKKKRWNRPKMSLAQKKDRVAQKKASFLRAQERAAES) form a disordered region. The span at 258–268 (KKEVKKKRWNR) shows a compositional bias: basic residues. The residue at position 272 (Ser272) is a Phosphoserine.

It belongs to the universal ribosomal protein uL18 family. Component of the large ribosomal subunit (LSU). Part of the 5S RNP complex, which is a LSU subcomplex composed of the 5S RNA, RPL5 and RPL11. Component of a hexameric 5S RNP precursor complex, composed of 5S RNA, RRS1, RPF2/BXDC1, RPL5, RPL11 and HEATR3; this complex acts as a precursor for ribosome assembly. Interacts with isoform 1 of NVL in an ATP-dependent manner. Interacts with RRP1B. Interacts with IPO5, IPO7 and KPNB1; these interactions may be involved in RPL5 nuclear import for the assembly of ribosomal subunits.

It localises to the cytoplasm. Its subcellular location is the nucleus. The protein localises to the nucleolus. Component of the ribosome, a large ribonucleoprotein complex responsible for the synthesis of proteins in the cell. The small ribosomal subunit (SSU) binds messenger RNAs (mRNAs) and translates the encoded message by selecting cognate aminoacyl-transfer RNA (tRNA) molecules. The large subunit (LSU) contains the ribosomal catalytic site termed the peptidyl transferase center (PTC), which catalyzes the formation of peptide bonds, thereby polymerizing the amino acids delivered by tRNAs into a polypeptide chain. The nascent polypeptides leave the ribosome through a tunnel in the LSU and interact with protein factors that function in enzymatic processing, targeting, and the membrane insertion of nascent chains at the exit of the ribosomal tunnel. As part of the 5S RNP/5S ribonucleoprotein particle it is an essential component of the LSU, required for its formation and the maturation of rRNAs. It also couples ribosome biogenesis to p53/TP53 activation. As part of the 5S RNP it accumulates in the nucleoplasm and inhibits MDM2, when ribosome biogenesis is perturbed, mediating the stabilization and the activation of TP53. In Homo sapiens (Human), this protein is Large ribosomal subunit protein uL18 (RPL5).